The following is a 400-amino-acid chain: Elongation factor Tu (400 aa).

The region spanning 10–209 (KPHVNIGTIG…VVDKYIPTPQ (200 aa)) is the tr-type G domain. The tract at residues 19-26 (GHVDHGKT) is G1. Position 19 to 26 (19 to 26 (GHVDHGKT)) interacts with GTP. Threonine 26 serves as a coordination point for Mg(2+). Residues 60 to 64 (GITIN) are G2. Positions 81-84 (DCPG) are G3. GTP-binding positions include 81-85 (DCPGH) and 136-139 (NKVD). The G4 stretch occupies residues 136-139 (NKVD). The segment at 174–176 (SAL) is G5.

This sequence belongs to the TRAFAC class translation factor GTPase superfamily. Classic translation factor GTPase family. EF-Tu/EF-1A subfamily. In terms of assembly, monomer.

It is found in the cytoplasm. The enzyme catalyses GTP + H2O = GDP + phosphate + H(+). GTP hydrolase that promotes the GTP-dependent binding of aminoacyl-tRNA to the A-site of ribosomes during protein biosynthesis. The sequence is that of Elongation factor Tu from Caldicellulosiruptor saccharolyticus (strain ATCC 43494 / DSM 8903 / Tp8T 6331).